The sequence spans 292 residues: tRNA pseudouridine synthase B (292 aa).

The active-site Nucleophile is aspartate 40.

This sequence belongs to the pseudouridine synthase TruB family. Type 1 subfamily.

It catalyses the reaction uridine(55) in tRNA = pseudouridine(55) in tRNA. Responsible for synthesis of pseudouridine from uracil-55 in the psi GC loop of transfer RNAs. This Mycoplasma mycoides subsp. mycoides SC (strain CCUG 32753 / NCTC 10114 / PG1) protein is tRNA pseudouridine synthase B.